Consider the following 132-residue polypeptide: Cliotide T2 (132 aa).

A signal peptide spans M1 to G28. The cyclopeptide (Gly-Asn) cross-link spans G29–N58. Disulfide bonds link C34/C48, C38/C50, and C43/C55. Residues H59–N132 constitute a propeptide, removed in mature form.

In terms of processing, this is a cyclic peptide. Expressed in flower, stem, shoot and pod but not in root, leaf, seed and nodule (at protein level).

Probably participates in a plant defense mechanism. Not active against Gram-negative bacteria E.coli ATCC 700926, K.pneumoniae ATTC 13883 and P.aeruginosa ATCC 39018 at concentration up to 100 uM. Has cytotoxic but no hemolytic activity. The protein is Cliotide T2 of Clitoria ternatea (Butterfly pea).